We begin with the raw amino-acid sequence, 875 residues long: Probable ATP-dependent RNA helicase DDX10 (875 aa).

Positions 1 to 44 (MGKTVASLGQGTRPDPVRSFNRWKKKHSHRQHQKKERRKQLKKP) are disordered. Phosphothreonine is present on threonine 4. Serine 7 is subject to Phosphoserine. Basic residues predominate over residues 21-41 (NRWKKKHSHRQHQKKERRKQL). The short motif at 69 to 97 (TRFSDFPLSKKTLKGLQEAQYRLVTEIQK) is the Q motif element. Residues 89-91 (YRL), glutamine 96, and 113-120 (AKTGSGKT) contribute to the ATP site. The region spanning 100–274 (IGLALQGKDV…RLSLKDPEYV (175 aa)) is the Helicase ATP-binding domain. A DEAD box motif is present at residues 222 to 225 (DEAD). The 150-residue stretch at 300–449 (KISVLFSFLR…EIKINPEKLI (150 aa)) folds into the Helicase C-terminal domain. A disordered region spans residues 525-612 (LVKNPVTEAV…HTESVVSIEE (88 aa)). At serine 540 the chain carries Phosphoserine. N6-acetyllysine is present on lysine 556. Positions 562–575 (KSGERLEETEHRLA) are enriched in basic and acidic residues. Positions 578–593 (DGDEEQDEETEDEETE) are enriched in acidic residues. A Phosphothreonine modification is found at threonine 587. The span at 594 to 604 (DHLGKAREPHT) shows a compositional bias: basic and acidic residues. Residue lysine 652 forms a Glycyl lysine isopeptide (Lys-Gly) (interchain with G-Cter in SUMO2) linkage. Over residues 734-744 (EEDKFDKEEYR) the composition is skewed to basic and acidic residues. The disordered stretch occupies residues 734 to 860 (EEDKFDKEEY…VEPLDTGLSL (127 aa)). Over residues 745-754 (KKIKAKHRER) the composition is skewed to basic residues. Over residues 755–774 (RLKEREARREANKRQAKARD) the composition is skewed to basic and acidic residues. A compositionally biased stretch (acidic residues) spans 775–789 (EEEAFLDWSDEDDGG). Residue serine 783 is modified to Phosphoserine. The span at 797–831 (DPDKHRSSEESESEDTNHKMSDTKKKQETRKRNNT) shows a compositional bias: basic and acidic residues.

It belongs to the DEAD box helicase family. DDX10/DBP4 subfamily. Interacts with AIM2; this interaction promotes AIM2 stability. Interacts with SCNA; this interaction causes DDX10 mislocalization to the nucleoplasm and cytoplasmic inclusions.

The protein localises to the cytoplasm. It localises to the nucleus. Its subcellular location is the nucleolus. It catalyses the reaction ATP + H2O = ADP + phosphate + H(+). Putative ATP-dependent RNA helicase that plays various role in innate immunity or inflammation. Plays a role in the enhancement of AIM2-induced inflammasome activation by interacting with AIM2 and stabilizing its protein level. Negatively regulates viral infection by promoting interferon beta production and interferon stimulated genes/ISGs expression. The chain is Probable ATP-dependent RNA helicase DDX10 (Ddx10) from Mus musculus (Mouse).